The primary structure comprises 104 residues: Ig kappa chain b5 variant C region (104 aa).

Positions 5–100 constitute an Ig-like domain; the sequence is PTVLIFPPSP…SGSPVVQSFS (96 aa). Residues cysteine 26 and cysteine 85 are joined by a disulfide bond.

The sequence is that of Ig kappa chain b5 variant C region from Oryctolagus cuniculus (Rabbit).